A 310-amino-acid polypeptide reads, in one-letter code: D-alanyl-D-alanine endopeptidase (310 aa).

The first 23 residues, 1–23, serve as a signal peptide directing secretion; that stretch reads MRNRLLSLVTLFLSLSVATAVSA. S66 (acyl-ester intermediate) is an active-site residue. K69 serves as the catalytic Proton acceptor. S123 is an active-site residue. Position 230 (K230) interacts with substrate.

Belongs to the peptidase S11 family.

It localises to the periplasm. Its function is as follows. Cell wall formation. The protein is D-alanyl-D-alanine endopeptidase (pbpG) of Pseudomonas aeruginosa (strain ATCC 15692 / DSM 22644 / CIP 104116 / JCM 14847 / LMG 12228 / 1C / PRS 101 / PAO1).